Consider the following 431-residue polypeptide: Histidinol dehydrogenase (431 aa).

NAD(+) is bound by residues Tyr-131, Gln-193, and Asn-216. Substrate-binding residues include Ser-239, Gln-261, and His-264. Gln-261 and His-264 together coordinate Zn(2+). Catalysis depends on proton acceptor residues Glu-329 and His-330. Residues His-330, Asp-363, Glu-417, and His-422 each coordinate substrate. Residue Asp-363 coordinates Zn(2+). Zn(2+) is bound at residue His-422.

This sequence belongs to the histidinol dehydrogenase family. It depends on Zn(2+) as a cofactor.

It catalyses the reaction L-histidinol + 2 NAD(+) + H2O = L-histidine + 2 NADH + 3 H(+). It functions in the pathway amino-acid biosynthesis; L-histidine biosynthesis; L-histidine from 5-phospho-alpha-D-ribose 1-diphosphate: step 9/9. Catalyzes the sequential NAD-dependent oxidations of L-histidinol to L-histidinaldehyde and then to L-histidine. This is Histidinol dehydrogenase from Clostridium acetobutylicum (strain ATCC 824 / DSM 792 / JCM 1419 / IAM 19013 / LMG 5710 / NBRC 13948 / NRRL B-527 / VKM B-1787 / 2291 / W).